A 253-amino-acid polypeptide reads, in one-letter code: Putative cysteine-rich repeat secretory protein 33 (253 aa).

The signal sequence occupies residues 1-28 (MFSSYSLCKCLVSFHILAIQVLISCASS). Gnk2-homologous domains are found at residues 34 to 133 (EYLN…MIND) and 141 to 250 (YDNI…LYPF).

The protein belongs to the cysteine-rich repeat secretory protein family.

Its subcellular location is the secreted. The sequence is that of Putative cysteine-rich repeat secretory protein 33 (CRRSP33) from Arabidopsis thaliana (Mouse-ear cress).